The sequence spans 430 residues: Enolase (430 aa).

Gln163 serves as a coordination point for (2R)-2-phosphoglycerate. Glu205 (proton donor) is an active-site residue. Residues Asp242, Glu288, and Asp315 each coordinate Mg(2+). 4 residues coordinate (2R)-2-phosphoglycerate: Lys340, Arg369, Ser370, and Lys391. The active-site Proton acceptor is Lys340.

This sequence belongs to the enolase family. It depends on Mg(2+) as a cofactor.

It localises to the cytoplasm. Its subcellular location is the secreted. It is found in the cell surface. It carries out the reaction (2R)-2-phosphoglycerate = phosphoenolpyruvate + H2O. The protein operates within carbohydrate degradation; glycolysis; pyruvate from D-glyceraldehyde 3-phosphate: step 4/5. Catalyzes the reversible conversion of 2-phosphoglycerate (2-PG) into phosphoenolpyruvate (PEP). It is essential for the degradation of carbohydrates via glycolysis. This is Enolase from Phytoplasma australiense.